A 238-amino-acid chain; its full sequence is tRNA (guanine-N(1)-)-methyltransferase (238 aa).

S-adenosyl-L-methionine contacts are provided by residues G108 and 127–132 (LGDFVL).

This sequence belongs to the RNA methyltransferase TrmD family. As to quaternary structure, homodimer.

It is found in the cytoplasm. It carries out the reaction guanosine(37) in tRNA + S-adenosyl-L-methionine = N(1)-methylguanosine(37) in tRNA + S-adenosyl-L-homocysteine + H(+). In terms of biological role, specifically methylates guanosine-37 in various tRNAs. The sequence is that of tRNA (guanine-N(1)-)-methyltransferase from Streptococcus uberis (strain ATCC BAA-854 / 0140J).